We begin with the raw amino-acid sequence, 205 residues long: Probable GTP-binding protein EngB (205 aa).

The EngB-type G domain maps to 21-196 (QVPEVAFAGR…VHEVSKCVKE (176 aa)). GTP is bound by residues 29–36 (GRSNVGKS), 56–60 (GSTRQ), 74–77 (DLPG), 141–144 (TKID), and 172–177 (IIGTSS). Positions 36 and 58 each coordinate Mg(2+).

It belongs to the TRAFAC class TrmE-Era-EngA-EngB-Septin-like GTPase superfamily. EngB GTPase family. Mg(2+) is required as a cofactor.

Its function is as follows. Necessary for normal cell division and for the maintenance of normal septation. The chain is Probable GTP-binding protein EngB from Anaplasma marginale (strain Florida).